Consider the following 92-residue polypeptide: Bombyxin A-9 (92 aa).

The signal sequence occupies residues 1–19 (MKLLLAIALMLTTVMWAST). The residue at position 20 (Gln20) is a Pyrrolidone carboxylic acid. Intrachain disulfides connect Cys29-Cys79, Cys41-Cys92, and Cys78-Cys83. The propeptide at 50–71 (SDAQFASYGSAWLMPYSEGRDQ) is c peptide like.

The protein belongs to the insulin family. As to quaternary structure, heterodimer of a B chain and an A chain linked by two disulfide bonds.

It is found in the secreted. Brain peptide responsible for activation of prothoracic glands to produce ecdysone in insects. In Bombyx mori (Silk moth), this protein is Bombyxin A-9 (BBXA9).